The primary structure comprises 474 residues: Glutamate--tRNA ligase (474 aa).

A 'HIGH' region motif is present at residues P18–G28. The 'KMSKS' region signature appears at K244–R248. Position 247 (K247) interacts with ATP.

The protein belongs to the class-I aminoacyl-tRNA synthetase family. Glutamate--tRNA ligase type 1 subfamily. In terms of assembly, monomer.

It is found in the cytoplasm. It carries out the reaction tRNA(Glu) + L-glutamate + ATP = L-glutamyl-tRNA(Glu) + AMP + diphosphate. Catalyzes the attachment of glutamate to tRNA(Glu) in a two-step reaction: glutamate is first activated by ATP to form Glu-AMP and then transferred to the acceptor end of tRNA(Glu). The chain is Glutamate--tRNA ligase from Caulobacter sp. (strain K31).